Consider the following 401-residue polypeptide: Coenzyme A biosynthesis bifunctional protein CoaBC (401 aa).

Residues 1-190 (MQTLAGKKIL…FQPKPLQDKS (190 aa)) are phosphopantothenoylcysteine decarboxylase. The active-site Proton donor is Cys159. Positions 191 to 401 (ILITAGPTRE…LKQIQTLMGH (211 aa)) are phosphopantothenate--cysteine ligase. Residues Asp279, Lys289, 307–310 (PDIV), Phe326, Lys340, and Lys344 each bind CTP.

In the N-terminal section; belongs to the HFCD (homo-oligomeric flavin containing Cys decarboxylase) superfamily. This sequence in the C-terminal section; belongs to the PPC synthetase family. Mg(2+) serves as cofactor. It depends on FMN as a cofactor.

It carries out the reaction N-[(R)-4-phosphopantothenoyl]-L-cysteine + H(+) = (R)-4'-phosphopantetheine + CO2. The enzyme catalyses (R)-4'-phosphopantothenate + L-cysteine + CTP = N-[(R)-4-phosphopantothenoyl]-L-cysteine + CMP + diphosphate + H(+). The protein operates within cofactor biosynthesis; coenzyme A biosynthesis; CoA from (R)-pantothenate: step 2/5. It functions in the pathway cofactor biosynthesis; coenzyme A biosynthesis; CoA from (R)-pantothenate: step 3/5. In terms of biological role, catalyzes two sequential steps in the biosynthesis of coenzyme A. In the first step cysteine is conjugated to 4'-phosphopantothenate to form 4-phosphopantothenoylcysteine. In the second step the latter compound is decarboxylated to form 4'-phosphopantotheine. This Vibrio vulnificus (strain CMCP6) protein is Coenzyme A biosynthesis bifunctional protein CoaBC.